The sequence spans 198 residues: Large ribosomal subunit protein bL25 (198 aa).

The protein belongs to the bacterial ribosomal protein bL25 family. CTC subfamily. In terms of assembly, part of the 50S ribosomal subunit; part of the 5S rRNA/L5/L18/L25 subcomplex. Contacts the 5S rRNA. Binds to the 5S rRNA independently of L5 and L18.

In terms of biological role, this is one of the proteins that binds to the 5S RNA in the ribosome where it forms part of the central protuberance. This chain is Large ribosomal subunit protein bL25, found in Nitrosomonas europaea (strain ATCC 19718 / CIP 103999 / KCTC 2705 / NBRC 14298).